We begin with the raw amino-acid sequence, 169 residues long: Lipoprotein signal peptidase (169 aa).

Over 1–9 (MPDVDRFGR) the chain is Cytoplasmic. A helical transmembrane segment spans residues 10-30 (LPWLWITVLVFVLDQVSKAFF). Over 31–67 (QAELSMYQQIVVIPDLFSWTLAYNTGAAFSFLADSSG) the chain is Periplasmic. A helical membrane pass occupies residues 68–89 (WQRWLFALIAIVVSASLVVWLK). The Cytoplasmic portion of the chain corresponds to 90–96 (RLKKGET). A helical membrane pass occupies residues 97-118 (WLAIALALVLGGALGNLYDRMV). At 119-140 (LGHVVDFILVHWQNRWYFPAFN) the chain is on the periplasmic side. Residues D124 and D143 contribute to the active site. Residues 141–154 (LADSAITVGAVMLA) form a helical membrane-spanning segment. Residues 155 to 169 (LDMFRSKKSGEAAHG) lie on the Cytoplasmic side of the membrane.

This sequence belongs to the peptidase A8 family. Monomer in the crystal.

The protein resides in the cell inner membrane. It carries out the reaction Release of signal peptides from bacterial membrane prolipoproteins. Hydrolyzes -Xaa-Yaa-Zaa-|-(S,diacylglyceryl)Cys-, in which Xaa is hydrophobic (preferably Leu), and Yaa (Ala or Ser) and Zaa (Gly or Ala) have small, neutral side chains.. Its pathway is protein modification; lipoprotein biosynthesis (signal peptide cleavage). Its activity is regulated as follows. Inhibited by globomycin. This protein specifically catalyzes the removal of signal peptides from prolipoproteins. The chain is Lipoprotein signal peptidase from Pseudomonas aeruginosa (strain ATCC 15692 / DSM 22644 / CIP 104116 / JCM 14847 / LMG 12228 / 1C / PRS 101 / PAO1).